A 506-amino-acid polypeptide reads, in one-letter code: Protein CYCLOPS (506 aa).

Disordered regions lie at residues 193–223 and 385–434; these read TVNSAPMSNTPSQTPTFVSPSSSSTSPLDNP and KENL…RSST. The span at 202-219 shows a compositional bias: low complexity; it reads TPSQTPTFVSPSSSSTSP. Over residues 385–394 the composition is skewed to basic and acidic residues; sequence KENLKDDRKK. A Nuclear localization signal motif is present at residues 415-418; the sequence is KKRR. The segment covering 422-432 has biased composition (basic and acidic residues); it reads SRKMAEAKERS. Residues 441-506 adopt a coiled-coil conformation; the sequence is IQVVLKRCET…IERIVSDTNT (66 aa).

The protein belongs to the CYCLOPS family. Highly epressed in roots. Expressed at very low levels in leaves, stems and panicles.

It localises to the nucleus. Involved in arbuscular mycorrhizal (AM) symbiosis. Required for fungal infection in roots and arbuscule development during AM symbiosis. The protein is Protein CYCLOPS of Oryza sativa subsp. japonica (Rice).